The primary structure comprises 430 residues: Replication factor C large subunit (430 aa).

Position 75–82 (75–82 (GPPGTGKT)) interacts with ATP.

It belongs to the activator 1 small subunits family. RfcL subfamily. As to quaternary structure, heteromultimer composed of small subunits (RfcS) and large subunits (RfcL).

Part of the RFC clamp loader complex which loads the PCNA sliding clamp onto DNA. The polypeptide is Replication factor C large subunit (Nanoarchaeum equitans (strain Kin4-M)).